Here is a 390-residue protein sequence, read N- to C-terminus: Bibenzyl synthase (390 aa).

Residue C164 is part of the active site.

It belongs to the thiolase-like superfamily. Chalcone/stilbene synthases family.

It catalyses the reaction 3-(3-hydroxyphenyl)-propanoyl-CoA + 3 malonyl-CoA + 3 H(+) = 3,3',5-trihydroxybibenzyl + 4 CO2 + 4 CoA. In Phalaenopsis sp. (Moth orchid), this protein is Bibenzyl synthase (BIBSY212).